A 160-amino-acid chain; its full sequence is MSRRHVAEKRIILPDMKYNSILLSRFINNIMKAGKKAVAEKIVYSAFNKIEKKHSVDPYQTFNNAMHNVKPHLEVTSVRVGGANYQVPTHVDERRGYALASRWIINAASKRSEKMMIDKLAEELFEAANNRGVAIKKKEDIHKMAEANKAFSHFSPKKMK.

It belongs to the universal ribosomal protein uS7 family. In terms of assembly, part of the 30S ribosomal subunit. Contacts proteins S9 and S11.

Its function is as follows. One of the primary rRNA binding proteins, it binds directly to 16S rRNA where it nucleates assembly of the head domain of the 30S subunit. Is located at the subunit interface close to the decoding center, probably blocks exit of the E-site tRNA. The chain is Small ribosomal subunit protein uS7 from Rickettsia typhi (strain ATCC VR-144 / Wilmington).